The sequence spans 620 residues: Leucine-rich repeat and immunoglobulin-like domain-containing nogo receptor-interacting protein 1 (620 aa).

The signal sequence occupies residues 1–41; sequence MQVSKRMLAGGVRSMPSPLLACWQPILLLVLGSVLSGSATG. 2 cysteine pairs are disulfide-bonded: Cys42–Cys48 and Cys46–Cys57. The LRRNT domain maps to 42–71; that stretch reads CPPRCECSAQDRAVLCHRKRFVAVPEGIPT. Topologically, residues 42-561 are extracellular; the sequence is CPPRCECSAQ…FDIKTLIIAT (520 aa). 11 LRR repeats span residues 72 to 93, 96 to 117, 120 to 141, 144 to 165, 168 to 189, 192 to 213, 216 to 237, 264 to 285, 288 to 309, 312 to 333, and 336 to 357; these read ETRL…EFAS, HLEE…AFNN, NLRT…VFTG, NLTK…MFQD, NLKS…AFSG, SLEQ…ALSH, GLIV…SFKR, NLTS…AVRH, YLRF…MLHE, RLQE…AFRG, and YLRV…VFHS. Residue Asn144 is glycosylated (N-linked (GlcNAc...) asparagine). N-linked (GlcNAc...) asparagine glycosylation is present at Asn202. Asn264, Asn274, and Asn293 each carry an N-linked (GlcNAc...) asparagine glycan. N-linked (GlcNAc...) asparagine glycosylation occurs at Asn341. Residues 369–423 enclose the LRRCT domain; that stretch reads NPLACDCRLLWVFRRRWRLNFNRQQPTCATPEFVQGKEFKDFPDVLLPNYFTCRR. 3 cysteine pairs are disulfide-bonded: Cys373–Cys396, Cys375–Cys421, and Cys446–Cys497. Residues 411-513 form the Ig-like C2-type domain; sequence PDVLLPNYFT…GNDSMPAHLH (103 aa). N-linked (GlcNAc...) asparagine glycosylation is found at Asn492, Asn505, Asn526, and Asn542. Residues 562–582 form a helical membrane-spanning segment; it reads TMGFISFLGVVLFCLVLLFLW. Over 583 to 620 the chain is Cytoplasmic; it reads SRGKGNTKHNIEIEYVPRKSDAGISSADAPRKFNMKMI. Ser602 is subject to Phosphoserine.

Homotetramer. Forms a ternary complex with RTN4R/NGFR and RTN4R/TNFRSF19. Interacts with NGRF and MYT1L. Interacts with RTN4R. N-glycosylated. Contains predominantly high-mannose glycans. In terms of tissue distribution, expressed exclusively in the central nervous system. Highest level in the in amygdala, hippocampus, thalamus and cerebral cortex. In the rest of the brain a basal expression seems to be always present. Up-regulated in substantia nigra neurons from Parkinson disease patients.

Its subcellular location is the cell membrane. Functionally, functional component of the Nogo receptor signaling complex (RTN4R/NGFR) in RhoA activation responsible for some inhibition of axonal regeneration by myelin-associated factors. Is also an important negative regulator of oligodentrocyte differentiation and axonal myelination. Acts in conjunction with RTN4 and RTN4R in regulating neuronal precursor cell motility during cortical development. This Homo sapiens (Human) protein is Leucine-rich repeat and immunoglobulin-like domain-containing nogo receptor-interacting protein 1 (LINGO1).